Reading from the N-terminus, the 309-residue chain is Ribonuclease H2 subunit B (309 aa).

Alanine 2 carries the post-translational modification N-acetylalanine. The residue at position 295 (lysine 295) is an N6-acetyllysine. Position 296 is a phosphoserine (serine 296).

The protein belongs to the RNase H2 subunit B family. The RNase H2 complex is a heterotrimer composed of the catalytic subunit RNASEH2A and the non-catalytic subunits RNASEH2B and RNASEH2C.

The protein localises to the nucleus. Functionally, non catalytic subunit of RNase H2, an endonuclease that specifically degrades the RNA of RNA:DNA hybrids. Participates in DNA replication, possibly by mediating the removal of lagging-strand Okazaki fragment RNA primers during DNA replication. Mediates the excision of single ribonucleotides from DNA:RNA duplexes. The sequence is that of Ribonuclease H2 subunit B (RNASEH2B) from Bos taurus (Bovine).